Reading from the N-terminus, the 126-residue chain is UPF0538 protein C2orf76 homolog (126 aa).

This sequence belongs to the UPF0538 family.

The sequence is that of UPF0538 protein C2orf76 homolog from Mus musculus (Mouse).